We begin with the raw amino-acid sequence, 501 residues long: ADP,ATP carrier protein 3 (501 aa).

12 helical membrane passes run 23–43 (LKLF…FGAL), 59–79 (IISF…TILY), 90–110 (YIFY…AYII), 146–166 (YALM…LMFW), 183–203 (PVLG…LVFF), 227–247 (IMLQ…MFLF), 293–313 (IALL…PWKA), 326–346 (VNFM…FMII), 361–381 (LLTP…IIFI), 383–403 (EIGT…VGAI), 446–466 (FGKS…PTAT), and 470–490 (IIIY…WNII).

The protein belongs to the ADP/ATP translocase tlc family.

The protein resides in the cell membrane. Functionally, provides the rickettsial cell with host ATP in exchange for rickettsial ADP. This is an obligate exchange system. This energy acquiring activity is an important component of rickettsial parasitism. This is ADP,ATP carrier protein 3 (tlcC) from Rickettsia prowazekii (strain Madrid E).